The chain runs to 155 residues: Protein archease-like (155 aa).

Residues Asp-26, Asp-154, and Ile-155 each contribute to the Ca(2+) site.

This sequence belongs to the archease family.

Component of the tRNA-splicing ligase complex required to facilitate the enzymatic turnover of catalytic subunit RtcB (F16A11.2). This chain is Protein archease-like, found in Caenorhabditis elegans.